An 844-amino-acid polypeptide reads, in one-letter code: DNA mismatch repair protein MutS (844 aa).

602-609 (GPNMSGKS) lines the ATP pocket.

The protein belongs to the DNA mismatch repair MutS family.

Functionally, this protein is involved in the repair of mismatches in DNA. It is possible that it carries out the mismatch recognition step. This protein has a weak ATPase activity. This is DNA mismatch repair protein MutS from Streptococcus pneumoniae (strain ATCC 700669 / Spain 23F-1).